A 323-amino-acid polypeptide reads, in one-letter code: tRNA U34 carboxymethyltransferase (323 aa).

Carboxy-S-adenosyl-L-methionine is bound by residues K91, W105, K110, G130, 152–154 (DPT), 181–182 (IE), M196, Y200, and R315.

It belongs to the class I-like SAM-binding methyltransferase superfamily. CmoB family. Homotetramer.

The catalysed reaction is carboxy-S-adenosyl-L-methionine + 5-hydroxyuridine(34) in tRNA = 5-carboxymethoxyuridine(34) in tRNA + S-adenosyl-L-homocysteine + H(+). Catalyzes carboxymethyl transfer from carboxy-S-adenosyl-L-methionine (Cx-SAM) to 5-hydroxyuridine (ho5U) to form 5-carboxymethoxyuridine (cmo5U) at position 34 in tRNAs. The polypeptide is tRNA U34 carboxymethyltransferase (Escherichia coli (strain K12 / MC4100 / BW2952)).